The primary structure comprises 274 residues: 2,3,4,5-tetrahydropyridine-2,6-dicarboxylate N-succinyltransferase (274 aa).

R104 and D141 together coordinate substrate.

It belongs to the transferase hexapeptide repeat family. As to quaternary structure, homotrimer.

The protein localises to the cytoplasm. The enzyme catalyses (S)-2,3,4,5-tetrahydrodipicolinate + succinyl-CoA + H2O = (S)-2-succinylamino-6-oxoheptanedioate + CoA. Its pathway is amino-acid biosynthesis; L-lysine biosynthesis via DAP pathway; LL-2,6-diaminopimelate from (S)-tetrahydrodipicolinate (succinylase route): step 1/3. This chain is 2,3,4,5-tetrahydropyridine-2,6-dicarboxylate N-succinyltransferase (dapD), found in Escherichia coli O157:H7.